The chain runs to 399 residues: Glycerate 2-kinase (399 aa).

Lys-48 contributes to the substrate binding site.

It belongs to the glycerate kinase type-1 family. Homodimer. Mg(2+) serves as cofactor. The cofactor is Ni(2+). Requires Mn(2+) as cofactor. Co(2+) is required as a cofactor. It depends on Ca(2+) as a cofactor. Zn(2+) serves as cofactor. The cofactor is Sr(2+).

It carries out the reaction (R)-glycerate + ATP = (2R)-2-phosphoglycerate + ADP + H(+). In terms of biological role, catalyzes the ATP-dependent phosphorylation of D-glycerate to 2-phosphoglycerate. It can also utilize GTP, CTP, UTP, ADP, AMP or pyrophosphate as phosphate donor. In Sulfurisphaera tokodaii (strain DSM 16993 / JCM 10545 / NBRC 100140 / 7) (Sulfolobus tokodaii), this protein is Glycerate 2-kinase (gck).